The chain runs to 496 residues: Maturase K (496 aa).

This sequence belongs to the intron maturase 2 family. MatK subfamily.

The protein localises to the plastid. It is found in the chloroplast. In terms of biological role, usually encoded in the trnK tRNA gene intron. Probably assists in splicing its own and other chloroplast group II introns. The polypeptide is Maturase K (Paeonia peregrina (Common peony)).